Here is a 79-residue protein sequence, read N- to C-terminus: Cytochrome b (79 aa).

3 helical membrane passes run 1-7 (TAMFLAM), 31-52 (WLIR…YLHI), and 67-79 (WNVG…LTMM). His-37 and His-51 together coordinate heme b.

The protein belongs to the cytochrome b family. The cytochrome bc1 complex contains 3 respiratory subunits (MT-CYB, CYC1 and UQCRFS1), 2 core proteins (UQCRC1 and UQCRC2) and probably 6 low-molecular weight proteins. The cofactor is heme b.

The protein localises to the mitochondrion inner membrane. In terms of biological role, component of the ubiquinol-cytochrome c reductase complex (complex III or cytochrome b-c1 complex) that is part of the mitochondrial respiratory chain. The b-c1 complex mediates electron transfer from ubiquinol to cytochrome c. Contributes to the generation of a proton gradient across the mitochondrial membrane that is then used for ATP synthesis. The sequence is that of Cytochrome b (mt-cyb) from Hypsophrys nicaraguensis (Moga).